Reading from the N-terminus, the 523-residue chain is NAD(P) transhydrogenase subunit alpha (523 aa).

Residues 1-411 (MKIGAPREIF…AEIATFRKQT (411 aa)) are Cytoplasmic-facing. NAD(+) contacts are provided by residues 127–130 (QKMD), Val177, 197–199 (DVR), and Gly229. 2 helical membrane-spanning segments follow: residues 412–432 (VSQV…GMYA) and 433–455 (PPSF…QVIW). The Cytoplasmic portion of the chain corresponds to 456 to 464 (NVSHSLHTP). The chain crosses the membrane as a helical span at residues 465–485 (LMAVTNAISGIVILGALLQIG). Residues 486-489 (SGNV) are Periplasmic-facing. Residues 490 to 510 (LVVLLAAISVLIATINIVGGF) form a helical membrane-spanning segment. Over 511–523 (LVTRRMLAMFQKS) the chain is Cytoplasmic.

Belongs to the AlaDH/PNT family. In terms of assembly, heterodimer of an alpha (PntA) and a beta (PntB) chain.

The protein localises to the cell inner membrane. It carries out the reaction NAD(+) + NADPH + H(+)(in) = NADH + NADP(+) + H(+)(out). The transhydrogenation between NADH and NADP is coupled to respiration and ATP hydrolysis and functions as a proton pump across the membrane. This is NAD(P) transhydrogenase subunit alpha from Cereibacter sphaeroides (Rhodobacter sphaeroides).